A 388-amino-acid polypeptide reads, in one-letter code: Na(+)/H(+) antiporter NhaA (388 aa).

The Cytoplasmic portion of the chain corresponds to 1-11 (MKHLHRFFSSD). Residues 12 to 31 (ASGGIILIIAAILAMMMANS) traverse the membrane as a helical segment. Topologically, residues 32-58 (GATSGWYHDFLETPVQLRVGSLEINKN) are periplasmic. Residues 59-80 (MLLWINDALMAVFFLLVGLEVK) traverse the membrane as a helical segment. The Cytoplasmic portion of the chain corresponds to 81–96 (RELMQGSLASLRQAAF). Residues 97-116 (PVIAAIGGMIVPALLYLAFN) traverse the membrane as a helical segment. Topologically, residues 117-122 (YADPIT) are periplasmic. A helical transmembrane segment spans residues 123–130 (REGWAIPA). The Cytoplasmic portion of the chain corresponds to 131-154 (ATDIAFALGVLALLGSRVPLALKI). A helical membrane pass occupies residues 155–176 (FLMALAIIDDLGAIIIIALFYT). Topologically, residues 177-180 (NDLS) are periplasmic. Residues 181-200 (MASLGVAAVAIAVLAVLNLC) form a helical membrane-spanning segment. The Cytoplasmic portion of the chain corresponds to 201 to 204 (GVRR). The chain crosses the membrane as a helical span at residues 205-222 (TGVYILVGVVLWTAVLKS). A topological domain (periplasmic) is located at residue Gly223. The chain crosses the membrane as a helical span at residues 224–236 (VHATLAGVIVGFF). Topologically, residues 237–253 (IPLKEKHGRSPAKRLEH) are cytoplasmic. The chain crosses the membrane as a helical span at residues 254 to 272 (VLHPWVAYLILPLFAFANA). Residues 273 to 286 (GVSLQGVTLDGLTS) lie on the Periplasmic side of the membrane. A helical transmembrane segment spans residues 287 to 310 (ILPLGIIAGLLIGKPLGISLFCWL). Over 311-339 (ALRLKLAHLPEGTTYQQIMAVGILCGIGF) the chain is Cytoplasmic. The chain crosses the membrane as a helical span at residues 340 to 350 (TMSIFIASLAF). Residues 351–357 (GSVDPEL) lie on the Periplasmic side of the membrane. Residues 358-380 (INWAKLGILVGSISSAVIGYSWL) traverse the membrane as a helical segment. Topologically, residues 381–388 (RVRLRPSV) are cytoplasmic.

This sequence belongs to the NhaA Na(+)/H(+) (TC 2.A.33) antiporter family.

The protein localises to the cell inner membrane. It catalyses the reaction Na(+)(in) + 2 H(+)(out) = Na(+)(out) + 2 H(+)(in). Its function is as follows. Na(+)/H(+) antiporter that extrudes sodium in exchange for external protons. The sequence is that of Na(+)/H(+) antiporter NhaA from Shigella boydii serotype 4 (strain Sb227).